A 616-amino-acid chain; its full sequence is Protein cereblon (616 aa).

3 disordered regions span residues 1–39 (MDEEETAEINAQEQEVAGSAGEAAAGPSGAEVQPNDDSV), 63–137 (FGPS…AMPR), and 182–220 (SQERRRSRNSDEVSPEAEDDELPEHPPPPPPRPPIDIDM). Low complexity predominate over residues 11 to 32 (AQEQEVAGSAGEAAAGPSGAEV). Positions 96–107 (SEEDIVLDDGTE) are enriched in acidic residues. Over residues 183–192 (QERRRSRNSD) the composition is skewed to basic and acidic residues. Acidic residues predominate over residues 194–203 (VSPEAEDDEL). A compositionally biased stretch (pro residues) spans 206 to 215 (HPPPPPPRPP). The Lon N-terminal domain maps to 257–482 (HMLIFLHQYI…LIGGILKEET (226 aa)). Positions 481–590 (ETLFYCRYCN…LAGSSVRIGK (110 aa)) constitute a CULT domain. 4 residues coordinate Zn(2+): C486, C489, C555, and C558.

This sequence belongs to the CRBN family. As to quaternary structure, likely a component of a DCX (DDB1-CUL4-X-box) protein ligase complex. May interact with pic/DDB1. In terms of processing, ubiquitinated.

The protein localises to the nucleus. The protein operates within protein modification; protein ubiquitination. In terms of biological role, substrate recognition component of a DCX (DDB1-CUL4-X-box) E3 protein ligase complex that mediates the ubiquitination and subsequent proteasomal degradation of target proteins. Has an essential role in mediating growth by negatively regulating insulin signaling. It also has a role in maintaining presynaptic function in the neuromuscular junction synapses of third-instar larvae. The polypeptide is Protein cereblon (Drosophila pseudoobscura pseudoobscura (Fruit fly)).